The sequence spans 498 residues: ATP synthase subunit beta, chloroplastic (498 aa).

An ATP-binding site is contributed by 172–179 (GGAGVGKT).

The protein belongs to the ATPase alpha/beta chains family. As to quaternary structure, F-type ATPases have 2 components, CF(1) - the catalytic core - and CF(0) - the membrane proton channel. CF(1) has five subunits: alpha(3), beta(3), gamma(1), delta(1), epsilon(1). CF(0) has four main subunits: a(1), b(1), b'(1) and c(9-12).

It is found in the plastid. The protein resides in the chloroplast thylakoid membrane. It catalyses the reaction ATP + H2O + 4 H(+)(in) = ADP + phosphate + 5 H(+)(out). In terms of biological role, produces ATP from ADP in the presence of a proton gradient across the membrane. The catalytic sites are hosted primarily by the beta subunits. This is ATP synthase subunit beta, chloroplastic from Lemna minor (Common duckweed).